A 782-amino-acid chain; its full sequence is Transcription factor Sp4 (782 aa).

Disordered stretches follow at residues 1 to 48, 107 to 148, and 275 to 385; these read MSDQ…PLAL, PPAS…TPNQ, and GGGT…QNAQ. S44 bears the Phosphoserine mark. The span at 107-119 shows a compositional bias: polar residues; that stretch reads PPASKENNVSQPA. Low complexity-rich tracts occupy residues 120-146 and 281-342; these read SSSS…PSTP and VGQP…SADT. Positions 344–354 are enriched in polar residues; that stretch reads QYASTSASSSE. Residues 364-378 are compositionally biased toward low complexity; sequence AATESEAQSSSQLQS. Residues 465-473 carry the 9aaTAD; inactive motif; the sequence is ISWQTVQVQ. 3 C2H2-type zinc fingers span residues 645-669, 675-699, and 705-727; these read HVCH…LRWH, FICN…RRTH, and FECP…VKTH.

It belongs to the Sp1 C2H2-type zinc-finger protein family. Expressed in many tissues.

It localises to the nucleus. Its function is as follows. Binds to GT and GC boxes promoters elements. Probable transcriptional activator. Required for normal male reproductive behavior. The sequence is that of Transcription factor Sp4 (Sp4) from Mus musculus (Mouse).